Here is a 160-residue protein sequence, read N- to C-terminus: tRNA (cytidine(34)-2'-O)-methyltransferase (160 aa).

S-adenosyl-L-methionine-binding residues include Leu-78, Gly-100, Ile-120, and Ser-128.

It belongs to the class IV-like SAM-binding methyltransferase superfamily. RNA methyltransferase TrmH family. TrmL subfamily. As to quaternary structure, homodimer.

It localises to the cytoplasm. The catalysed reaction is cytidine(34) in tRNA + S-adenosyl-L-methionine = 2'-O-methylcytidine(34) in tRNA + S-adenosyl-L-homocysteine + H(+). It catalyses the reaction 5-carboxymethylaminomethyluridine(34) in tRNA(Leu) + S-adenosyl-L-methionine = 5-carboxymethylaminomethyl-2'-O-methyluridine(34) in tRNA(Leu) + S-adenosyl-L-homocysteine + H(+). In terms of biological role, methylates the ribose at the nucleotide 34 wobble position in the two leucyl isoacceptors tRNA(Leu)(CmAA) and tRNA(Leu)(cmnm5UmAA). Catalyzes the methyl transfer from S-adenosyl-L-methionine to the 2'-OH of the wobble nucleotide. The polypeptide is tRNA (cytidine(34)-2'-O)-methyltransferase (Beijerinckia indica subsp. indica (strain ATCC 9039 / DSM 1715 / NCIMB 8712)).